Consider the following 224-residue polypeptide: uncharacterized protein (224 aa).

The next 5 membrane-spanning stretches (helical) occupy residues 32–52 (ILTL…PLVV), 60–80 (LFTN…IYFF), 100–120 (IIYL…SGLG), 130–150 (AIAY…LFGF), and 162–182 (LGFS…FGII).

This sequence belongs to the derlin family.

The protein localises to the endoplasmic reticulum membrane. This is an uncharacterized protein from Schizosaccharomyces pombe (strain 972 / ATCC 24843) (Fission yeast).